The primary structure comprises 444 residues: ATPase PAAT (444 aa).

3 positions are modified to phosphoserine: Ser-177, Ser-182, and Ser-254. Residues Ser-279 to Asn-300 are disordered. Polar residues predominate over residues Ala-280–Thr-289. Ser-302 carries the phosphoserine modification. Positions Pro-424–Arg-444 are disordered. The segment covering Arg-431–Arg-444 has biased composition (basic and acidic residues).

Homodimer. Interacts with ABCB7, ABCB8/MITOSUR and ABCB10.

The protein resides in the cytoplasm. Its subcellular location is the mitochondrion. The enzyme catalyses ATP + H2O = ADP + phosphate + H(+). ATPase that regulates mitochondrial ABC transporters ABCB7, ABCB8/MITOSUR and ABCB10. Regulates mitochondrial ferric concentration and heme biosynthesis and plays a role in the maintenance of mitochondrial homeostasis and cell survival. This is ATPase PAAT from Mus musculus (Mouse).